The following is a 271-amino-acid chain: 4-hydroxy-tetrahydrodipicolinate reductase (271 aa).

NAD(+)-binding positions include 10–15 (GAGGRM), Glu-36, 100–102 (GTT), and 124–127 (SGNM). His-157 functions as the Proton donor/acceptor in the catalytic mechanism. Position 158 (His-158) interacts with (S)-2,3,4,5-tetrahydrodipicolinate. Lys-161 serves as the catalytic Proton donor. (S)-2,3,4,5-tetrahydrodipicolinate is bound at residue 167–168 (GT).

The protein belongs to the DapB family.

It localises to the cytoplasm. It catalyses the reaction (S)-2,3,4,5-tetrahydrodipicolinate + NAD(+) + H2O = (2S,4S)-4-hydroxy-2,3,4,5-tetrahydrodipicolinate + NADH + H(+). It carries out the reaction (S)-2,3,4,5-tetrahydrodipicolinate + NADP(+) + H2O = (2S,4S)-4-hydroxy-2,3,4,5-tetrahydrodipicolinate + NADPH + H(+). It functions in the pathway amino-acid biosynthesis; L-lysine biosynthesis via DAP pathway; (S)-tetrahydrodipicolinate from L-aspartate: step 4/4. Catalyzes the conversion of 4-hydroxy-tetrahydrodipicolinate (HTPA) to tetrahydrodipicolinate. This Bradyrhizobium diazoefficiens (strain JCM 10833 / BCRC 13528 / IAM 13628 / NBRC 14792 / USDA 110) protein is 4-hydroxy-tetrahydrodipicolinate reductase.